The chain runs to 630 residues: Plastin-1 (630 aa).

N-acetylmethionine is present on methionine 1. EF-hand domains are found at residues glutamate 11–proline 46 and lysine 51–lysine 86. Ca(2+) is bound by residues aspartate 24, aspartate 26, serine 28, tyrosine 30, glutamate 35, aspartate 64, asparagine 66, aspartate 68, lysine 70, and glutamate 75. Actin-binding stretches follow at residues threonine 108–lysine 381 and proline 382–leucine 626. Calponin-homology (CH) domains follow at residues glutamate 122–leucine 238, leucine 266–proline 377, serine 396–threonine 505, and lysine 517–leucine 626.

In terms of assembly, monomer. In terms of processing, phosphorylated. In the inner ear, it is expressed in the organ of Corti. Abundant in the utricle (at protein level).

The protein localises to the cytoplasm. The protein resides in the cell projection. It is found in the stereocilium. Actin-bundling protein. In the inner ear, it is required for stereocilia formation. Mediates liquid packing of actin filaments that is necessary for stereocilia to grow to their proper dimensions. This Mus musculus (Mouse) protein is Plastin-1 (Pls1).